Here is a 326-residue protein sequence, read N- to C-terminus: MDNARMNSFLDYSIINGETGTCSSRSYHADQGITTYQSCAVSNNNCNADDRYIVSRSVQIGAPPPHHHHHQSNYTHPNNLGISYSAHPNCGAGYPAQSFNTGYSHHYSLNQETDGNGGYPQCAPAVYPGNIASAISPHHHSYGGMVGSGQYPHHPYGQEQQGLALAAGCHSLSPVHGSHQEACCSPSAETPPPAQTFDWMKVKRNPPKTGKAGEYGFAGQPNTVRTNFTTKQLTELEKEFHFNKYLTRARRVEIAAALQLNETQVKIWFQNRRMKQKKREKEGLTSASPATPGSEANTEDTSDKCNSTSSTPSPSSSTSETINTSG.

The Antp-type hexapeptide signature appears at 196-201 (TFDWMK). The homeobox DNA-binding region spans 221–280 (PNTVRTNFTTKQLTELEKEFHFNKYLTRARRVEIAAALQLNETQVKIWFQNRRMKQKKRE). The disordered stretch occupies residues 273–326 (RMKQKKREKEGLTSASPATPGSEANTEDTSDKCNSTSSTPSPSSSTSETINTSG). The segment covering 285–296 (TSASPATPGSEA) has biased composition (polar residues). Residues 306-326 (NSTSSTPSPSSSTSETINTSG) are compositionally biased toward low complexity.

Belongs to the Antp homeobox family. Labial subfamily.

The protein localises to the nucleus. Its function is as follows. Sequence-specific transcription factor. Part of a developmental regulatory system that provides cells with specific positional identities on the anterior-posterior axis. Acts on the anterior body structures. Seems to act in the maintenance and/or generation of hindbrain segments. This chain is Homeobox protein Hox-A1 (HOXA1), found in Heterodontus francisci (Horn shark).